The following is a 371-amino-acid chain: Zygote-specific protein 3 (371 aa).

The N-terminal stretch at 1–24 (MLRSAGRVAAVALLALFALGCVSA) is a signal peptide. N-linked (GlcNAc...) asparagine glycosylation is present at Asn41. ANK repeat units follow at residues 62-91 (TRRL…LARV) and 94-123 (GTTT…DPNA). 2 consecutive WW domains span residues 159 to 187 (EPGA…WAVP) and 283 to 313 (YATP…WELP).

It localises to the endoplasmic reticulum lumen. In terms of biological role, may have a role in the remodeling of the endoplasmic reticulum upon zygote formation. This chain is Zygote-specific protein 3 (ZYS3), found in Chlamydomonas reinhardtii (Chlamydomonas smithii).